A 282-amino-acid polypeptide reads, in one-letter code: Small-conductance mechanosensitive channel (282 aa).

Over methionine 1–aspartate 23 the chain is Periplasmic. Residues valine 24–tyrosine 46 traverse the membrane as a helical segment. The Cytoplasmic portion of the chain corresponds to lysine 47–serine 66. A helical membrane pass occupies residues leucine 67–leucine 87. The Periplasmic portion of the chain corresponds to phenylalanine 88–asparagine 89. A helical transmembrane segment spans residues isoleucine 90 to alanine 110. The Cytoplasmic portion of the chain corresponds to glutamine 111–asparagine 282.

The protein belongs to the MscS (TC 1.A.23) family. Homoheptamer.

It localises to the cell inner membrane. In terms of biological role, mechanosensitive ion channel that participates in the regulation of osmotic pressure changes within the cell, opening in response to stretch forces in the membrane lipid bilayer, without the need for other proteins. Has high selectivity for anions, and may contribute to resistance to hypoosmotic shock. This is Small-conductance mechanosensitive channel from Caldanaerobacter subterraneus subsp. tengcongensis (strain DSM 15242 / JCM 11007 / NBRC 100824 / MB4) (Thermoanaerobacter tengcongensis).